The chain runs to 439 residues: MFNFAPKQTTEMKKLLFTLVFVLGSMATALAENYPYRADYLWLTVPNHADWLYKTGERAKVEVSFCLYGMPQNVEVAYEIGPDMMPATSSGKVTLKNGRAVIDMGTMKKPGFLDMRLSVDGKYQHHVKVGFSPELLKPYTKNPQDFDAFWKANLDEARKTPVSVSCNKVDKYTTDAFDCYLLKIKTDRRHSIYGYLTKPKKAGKYPVVLCPPGAGIKTIKEPMRSTFYAKNGFIRLEMEIHGLNPEMTDEQFKEITTAFDYENGYLTNGLDDRDNYYMKHVYVACVRAIDYLTSLPDWDGKNVFVQGGSQGGALSLVTAGLDPRVTACVANHPALSDMAGYLDNRAGGYPHFNRLKNMFTPEKVNTMAYYDVVNFARRITCPVYITWGYNDNVCPPTTSYIVWNLITAPKESLITPINEHWTTSETNYTQMLWLKKQVK.

The N-terminal stretch at 1 to 31 is a signal peptide; sequence MFNFAPKQTTEMKKLLFTLVFVLGSMATALA. The Nucleophile role is filled by Ser309. Active-site charge relay system residues include Asp391 and His420.

The protein belongs to the carbohydrate esterase 7 family.

The protein operates within glycan degradation; xylan degradation. In terms of biological role, involved in degradation of plant cell wall polysaccharides. Has acetyl esterase activity towards a broad range of substrates including xylose-tetraacetate, 4-O-methylumbelliferyl acetate, glucose-pentaacetate, cephalosporin C, and acetylated xylo-oligosaccharides smaller than xylo-heptaose. Displays no detectable activity on polymeric acetylated xylan. In Xylanibacter ruminicola (strain ATCC 19189 / DSM 19721 / CIP 105475 / JCM 8958 / 23) (Prevotella ruminicola), this protein is Acetyl esterase Axe7A.